The sequence spans 480 residues: Aspartyl/glutamyl-tRNA(Asn/Gln) amidotransferase subunit B (480 aa).

Belongs to the GatB/GatE family. GatB subfamily. As to quaternary structure, heterotrimer of A, B and C subunits.

The enzyme catalyses L-glutamyl-tRNA(Gln) + L-glutamine + ATP + H2O = L-glutaminyl-tRNA(Gln) + L-glutamate + ADP + phosphate + H(+). It catalyses the reaction L-aspartyl-tRNA(Asn) + L-glutamine + ATP + H2O = L-asparaginyl-tRNA(Asn) + L-glutamate + ADP + phosphate + 2 H(+). Its function is as follows. Allows the formation of correctly charged Asn-tRNA(Asn) or Gln-tRNA(Gln) through the transamidation of misacylated Asp-tRNA(Asn) or Glu-tRNA(Gln) in organisms which lack either or both of asparaginyl-tRNA or glutaminyl-tRNA synthetases. The reaction takes place in the presence of glutamine and ATP through an activated phospho-Asp-tRNA(Asn) or phospho-Glu-tRNA(Gln). In Caldicellulosiruptor bescii (strain ATCC BAA-1888 / DSM 6725 / KCTC 15123 / Z-1320) (Anaerocellum thermophilum), this protein is Aspartyl/glutamyl-tRNA(Asn/Gln) amidotransferase subunit B.